Reading from the N-terminus, the 348-residue chain is MSDRQAALDMALKQIEKQFGKGSIMKLGEQTETRISTVPSGSLALDAALGVGGYPRGRIIEVYGPESSGKTTVALHAIAEVQQQGGQAAFIDAEHALDPVYAQKLGVNIDELLLSQPDTGEQALEIAEALVRSGAVDIVVIDSVAALVPKAEIEGDMGDSHVGLQARLMSQALRKLSGAINKSKTIAIFINQIREKVGVMFGNPETTPGGRALKFYSSVRLEVRRAEQLKQGNDVMGNKTKIKVVKNKVAPPFRTAEVDIMYGEGISKEGEIIDLGTELDIVQKSGAWYSYQEERLGQGRENAKQFLKENKDILLMIQEQIREHYGLDTGGAAPAQEDEAQAQEELEF.

64–71 provides a ligand contact to ATP; sequence GPESSGKT. The interval 328 to 348 is disordered; it reads DTGGAAPAQEDEAQAQEELEF. Positions 336–348 are enriched in acidic residues; sequence QEDEAQAQEELEF.

The protein belongs to the RecA family.

It is found in the cytoplasm. In terms of biological role, can catalyze the hydrolysis of ATP in the presence of single-stranded DNA, the ATP-dependent uptake of single-stranded DNA by duplex DNA, and the ATP-dependent hybridization of homologous single-stranded DNAs. It interacts with LexA causing its activation and leading to its autocatalytic cleavage. This Bacillus licheniformis (strain ATCC 14580 / DSM 13 / JCM 2505 / CCUG 7422 / NBRC 12200 / NCIMB 9375 / NCTC 10341 / NRRL NRS-1264 / Gibson 46) protein is Protein RecA.